A 158-amino-acid polypeptide reads, in one-letter code: MSQEKKYVITYKGVKKLEEELEYLKTTKRKEITEKIKVALSFGDLSENSEYDEAKNDQAFVEGRIAQIENMLKNANVIDESELKNDVVSVGSKVMVKDYQFDEEIEFSIVGSAEADPIENKISNESPVGSALIGKKVGDEIEVNVPDGVDKYKILAIK.

Residues 14–76 (VKKLEEELEY…QIENMLKNAN (63 aa)) are a coiled coil.

It belongs to the GreA/GreB family.

Functionally, necessary for efficient RNA polymerase transcription elongation past template-encoded arresting sites. The arresting sites in DNA have the property of trapping a certain fraction of elongating RNA polymerases that pass through, resulting in locked ternary complexes. Cleavage of the nascent transcript by cleavage factors such as GreA or GreB allows the resumption of elongation from the new 3'terminus. GreA releases sequences of 2 to 3 nucleotides. The sequence is that of Transcription elongation factor GreA from Clostridium acetobutylicum (strain ATCC 824 / DSM 792 / JCM 1419 / IAM 19013 / LMG 5710 / NBRC 13948 / NRRL B-527 / VKM B-1787 / 2291 / W).